The sequence spans 248 residues: MEDIVDQELSNYWEPSSFLQNEDFEYDRSWPLEEAISGSYDSSSPDGAASSPASKNIVSERNRRQKLNQRLFALRSVVPNITKMDKASIIKDAISYIEGLQYEEKKLEAEIRELESTPKSSLSFSKDFDRDLLVPVTSKKMKQLDSGSSTSLIEVLELKVTFMGERTMVVSVTCNKRTDTMVKLCEVFESLNLKILTSNLTSFSGMIFHTVFIEADEEEQEVLRLKIETGIGAYNETQSPTLSIDSLY.

Over residues 37 to 54 (SGSYDSSSPDGAASSPAS) the composition is skewed to low complexity. The disordered stretch occupies residues 37 to 60 (SGSYDSSSPDGAASSPASKNIVSE). The 50-residue stretch at 51–100 (SPASKNIVSERNRRQKLNQRLFALRSVVPNITKMDKASIIKDAISYIEGL) folds into the bHLH domain.

In terms of assembly, homodimer. Expressed constitutively in roots, leaves, stems, and flowers.

The protein localises to the nucleus. This Arabidopsis thaliana (Mouse-ear cress) protein is Transcription factor bHLH35 (BHLH35).